The sequence spans 128 residues: uncharacterized protein (128 aa).

This is an uncharacterized protein from Mycobacterium bovis (strain ATCC BAA-935 / AF2122/97).